A 363-amino-acid chain; its full sequence is Flagellar P-ring protein (363 aa).

Positions methionine 1–alanine 20 are cleaved as a signal peptide.

It belongs to the FlgI family. The basal body constitutes a major portion of the flagellar organelle and consists of four rings (L,P,S, and M) mounted on a central rod.

It is found in the periplasm. The protein resides in the bacterial flagellum basal body. Its function is as follows. Assembles around the rod to form the L-ring and probably protects the motor/basal body from shearing forces during rotation. This Shewanella woodyi (strain ATCC 51908 / MS32) protein is Flagellar P-ring protein.